A 240-amino-acid polypeptide reads, in one-letter code: Heme oxygenase 1 (240 aa).

Heme b contacts are provided by R10, H17, Y125, K168, and R172.

The protein belongs to the heme oxygenase family.

It carries out the reaction heme b + 3 reduced [NADPH--hemoprotein reductase] + 3 O2 = biliverdin IXalpha + CO + Fe(2+) + 3 oxidized [NADPH--hemoprotein reductase] + 3 H2O + H(+). In terms of biological role, catalyzes the opening of the heme ring with the release of iron. Key enzyme in the synthesis of the chromophoric part of the photosynthetic antennae. In Synechocystis sp. (strain ATCC 27184 / PCC 6803 / Kazusa), this protein is Heme oxygenase 1 (pbsA1).